The primary structure comprises 212 residues: Phosphatidylserine decarboxylase proenzyme (212 aa).

Serine 182 serves as the catalytic Schiff-base intermediate with substrate; via pyruvic acid. At serine 182 the chain carries Pyruvic acid (Ser); by autocatalysis.

The protein belongs to the phosphatidylserine decarboxylase family. PSD-A subfamily. Heterodimer of a large membrane-associated beta subunit and a small pyruvoyl-containing alpha subunit. It depends on pyruvate as a cofactor. In terms of processing, is synthesized initially as an inactive proenzyme. Formation of the active enzyme involves a self-maturation process in which the active site pyruvoyl group is generated from an internal serine residue via an autocatalytic post-translational modification. Two non-identical subunits are generated from the proenzyme in this reaction, and the pyruvate is formed at the N-terminus of the alpha chain, which is derived from the carboxyl end of the proenzyme. The post-translation cleavage follows an unusual pathway, termed non-hydrolytic serinolysis, in which the side chain hydroxyl group of the serine supplies its oxygen atom to form the C-terminus of the beta chain, while the remainder of the serine residue undergoes an oxidative deamination to produce ammonia and the pyruvoyl prosthetic group on the alpha chain.

It localises to the cell membrane. The enzyme catalyses a 1,2-diacyl-sn-glycero-3-phospho-L-serine + H(+) = a 1,2-diacyl-sn-glycero-3-phosphoethanolamine + CO2. Its pathway is phospholipid metabolism; phosphatidylethanolamine biosynthesis; phosphatidylethanolamine from CDP-diacylglycerol: step 2/2. In terms of biological role, catalyzes the formation of phosphatidylethanolamine (PtdEtn) from phosphatidylserine (PtdSer). The protein is Phosphatidylserine decarboxylase proenzyme of Chlorobium luteolum (strain DSM 273 / BCRC 81028 / 2530) (Pelodictyon luteolum).